A 421-amino-acid polypeptide reads, in one-letter code: MSKTHLTEQKFSDFALHPKVVEALEKKGFHNCTPIQALALPLTLAGRDVAGQAQTGTGKTMAFLTSTFHCLLSHPAIADRKVNQPRALIMAPTRELAVQIHADAEPLAEATGLKLGLAYGGDGYDKQLKVLESGVDILIGTTGRLIDYAKQNHINLGAIQVVVLDEADRMYDLGFIKDIRWLFRRMPPANQRLNMLFSATLSYRVRELAFEQMNNAEYIEVEPEQKTGHRIKEELFYPSNEEKMRLLQTLIEEEWPDRAIIFANTKHRCEEIWGHLAADGHRVGLLTGDVAQKKRLRILDEFTRGDLDILVATDVAARGLHIPAVTHVFNYDLPDDCEDYVHRIGRTGRAGASGHSISLACEEYALNLPAIETYIGHSIPVSKYNPDALMTDLPKPLRLTRPRTGNGPRRTGAPRNRRRSG.

The Q motif motif lies at 9–37 (QKFSDFALHPKVVEALEKKGFHNCTPIQA). Residues 40 to 219 (LPLTLAGRDV…FEQMNNAEYI (180 aa)) form the Helicase ATP-binding domain. 53–60 (AQTGTGKT) lines the ATP pocket. Positions 165 to 168 (DEAD) match the DEAD box motif. The Helicase C-terminal domain occupies 245–390 (RLLQTLIEEE…VSKYNPDALM (146 aa)). The tract at residues 392–421 (DLPKPLRLTRPRTGNGPRRTGAPRNRRRSG) is disordered. A compositionally biased stretch (low complexity) spans 402 to 414 (PRTGNGPRRTGAP).

This sequence belongs to the DEAD box helicase family. RhlB subfamily. In terms of assembly, component of the RNA degradosome, which is a multiprotein complex involved in RNA processing and mRNA degradation.

It localises to the cytoplasm. It catalyses the reaction ATP + H2O = ADP + phosphate + H(+). Functionally, DEAD-box RNA helicase involved in RNA degradation. Has RNA-dependent ATPase activity and unwinds double-stranded RNA. The sequence is that of ATP-dependent RNA helicase RhlB from Escherichia coli O157:H7 (strain EC4115 / EHEC).